The primary structure comprises 212 residues: RNA chaperone ProQ (212 aa).

The interval 107 to 153 (QDKAKAKRVAQAKSANPAAKTAKKPVKKPVAKRPKPAQSSKPAKEPV) is disordered. Low complexity predominate over residues 117-126 (QAKSANPAAK). Over residues 127–141 (TAKKPVKKPVAKRPK) the composition is skewed to basic residues.

Belongs to the ProQ family.

It is found in the cytoplasm. Its function is as follows. RNA chaperone with significant RNA binding, RNA strand exchange and RNA duplexing activities. The polypeptide is RNA chaperone ProQ (Shewanella pealeana (strain ATCC 700345 / ANG-SQ1)).